The primary structure comprises 285 residues: uncharacterized protein (285 aa).

Disordered stretches follow at residues 115–139 and 152–183; these read AAGKASVQARRSRKEADVQTKQERN and EHDVNTKATNKDTDKDLKTDPPLNPPRGNRGV. Composition is skewed to basic and acidic residues over residues 128 to 138 and 152 to 170; these read KEADVQTKQER and EHDVNTKATNKDTDKDLKT.

This is an uncharacterized protein from Escherichia coli (strain K12).